We begin with the raw amino-acid sequence, 358 residues long: Arginase (358 aa).

The Mn(2+) site is built by His146, Asp174, His176, and Asp178. Substrate is bound by residues 176–180 (HADIN), 187–189 (SGN), and Asp233. Asp280 and Asp282 together coordinate Mn(2+). Positions 294 and 325 each coordinate substrate.

It belongs to the arginase family. Homohexamer. Mn(2+) is required as a cofactor.

The protein localises to the cytoplasm. The catalysed reaction is L-arginine + H2O = urea + L-ornithine. Its pathway is nitrogen metabolism; urea cycle; L-ornithine and urea from L-arginine: step 1/1. In Neurospora crassa (strain ATCC 24698 / 74-OR23-1A / CBS 708.71 / DSM 1257 / FGSC 987), this protein is Arginase (aga-1).